The chain runs to 232 residues: Ribonuclease HII (232 aa).

The 193-residue stretch at 26–218 (RILCGVDEAG…VRRALEGMSA (193 aa)) folds into the RNase H type-2 domain. Aspartate 32, glutamate 33, and aspartate 127 together coordinate a divalent metal cation.

This sequence belongs to the RNase HII family. It depends on Mn(2+) as a cofactor. The cofactor is Mg(2+).

It is found in the cytoplasm. It catalyses the reaction Endonucleolytic cleavage to 5'-phosphomonoester.. Its function is as follows. Endonuclease that specifically degrades the RNA of RNA-DNA hybrids. The polypeptide is Ribonuclease HII (Ralstonia pickettii (strain 12J)).